A 932-amino-acid polypeptide reads, in one-letter code: Serine/threonine-protein kinase PknD (932 aa).

The Protein kinase domain occupies 4 to 291 (YDIVRIIGKG…ELKEDIESHL (288 aa)). Residues 10–18 (IGKGGMGEV) and Lys-33 contribute to the ATP site. Catalysis depends on Asp-138, which acts as the Proton acceptor.

It belongs to the protein kinase superfamily. Ser/Thr protein kinase family. Autophosphorylated on serine and threonine residues.

It catalyses the reaction L-seryl-[protein] + ATP = O-phospho-L-seryl-[protein] + ADP + H(+). The enzyme catalyses L-threonyl-[protein] + ATP = O-phospho-L-threonyl-[protein] + ADP + H(+). Functionally, together with the serine/threonine kinase Pkn1, may play a role in the specific interactions with host proteins during intracellular growth. This Chlamydia pneumoniae (Chlamydophila pneumoniae) protein is Serine/threonine-protein kinase PknD.